The sequence spans 431 residues: TDP-daunosamine transferase DnrS (431 aa).

Residues 1–23 form the signal peptide; sequence MKVLVTAFAMDAHFNGVVPLAWA.

The protein belongs to the glycosyltransferase 28 family.

The enzyme catalyses dTDP-beta-L-daunosamine + epsilon-rhodomycinone = rhodomycin D + dTDP + H(+). The protein operates within antibiotic biosynthesis; daunorubicin biosynthesis. It participates in antibiotic biosynthesis; carminomycin biosynthesis. Its function is as follows. Involved in the biosynthesis of the anthracyclines carminomycin and daunorubicin (daunomycin) which are aromatic polyketide antibiotics that exhibit high cytotoxicity and are widely applied in the chemotherapy of a variety of cancers. Catalyzes the addition of the TDP activated glycoside, L-daunosamine-TDP (2,3,6-trideoxy-3-aminohexose-TDP) at position C-7 of epsilon-rhodomycinone to yield rhodomycin D. Glycosylation is a prerequisite for biological activity of anthracyclines and requires DnrQ which seems to act as an activator. This chain is TDP-daunosamine transferase DnrS (dnrS), found in Streptomyces peucetius.